Here is a 615-residue protein sequence, read N- to C-terminus: Chaperone protein DnaK (615 aa).

Residue T195 is modified to Phosphothreonine; by autocatalysis. Residues 592 to 615 form a disordered region; the sequence is EKGAQAASGKGPDDVIDADYKPAD.

This sequence belongs to the heat shock protein 70 family.

Its function is as follows. Acts as a chaperone. The sequence is that of Chaperone protein DnaK from Thermus thermophilus (strain ATCC BAA-163 / DSM 7039 / HB27).